Consider the following 430-residue polypeptide: Probable carboxypeptidase AFLA_037450 (430 aa).

Positions 1-16 are cleaved as a signal peptide; the sequence is MKSIYSLVLCTALTAA. Asparagine 84 is a glycosylation site (N-linked (GlcNAc...) asparagine). Residue aspartate 156 participates in Zn(2+) binding. Glutamate 188 serves as the catalytic Proton acceptor. Glutamate 189 serves as a coordination point for Zn(2+). Asparagine 285 carries N-linked (GlcNAc...) asparagine glycosylation.

This sequence belongs to the peptidase M20A family. The cofactor is Zn(2+).

It localises to the secreted. The polypeptide is Probable carboxypeptidase AFLA_037450 (Aspergillus flavus (strain ATCC 200026 / FGSC A1120 / IAM 13836 / NRRL 3357 / JCM 12722 / SRRC 167)).